We begin with the raw amino-acid sequence, 220 residues long: Late transcription elongation factor OPG087 (220 aa).

The protein belongs to the orthopoxvirus OPG087 family. As to quaternary structure, interacts with H5 and A18. Might be part of a transcription complex composed at least of OPG087, OPG145, and OPG110.

Its function is as follows. Involved in postreplicative transcription elongation on intermediate and late genes. In Cynomys gunnisoni (Gunnison's prairie dog), this protein is Late transcription elongation factor OPG087 (OPG087).